The following is a 180-amino-acid chain: UPF0227 protein KPN78578_10770 (180 aa).

This sequence belongs to the UPF0227 family.

The chain is UPF0227 protein KPN78578_10770 from Klebsiella pneumoniae subsp. pneumoniae (strain ATCC 700721 / MGH 78578).